The primary structure comprises 366 residues: NADH-quinone oxidoreductase subunit D (366 aa).

Belongs to the complex I 49 kDa subunit family. In terms of assembly, NDH-1 is composed of 14 different subunits. Subunits NuoB, C, D, E, F, and G constitute the peripheral sector of the complex.

The protein localises to the cell membrane. It carries out the reaction a quinone + NADH + 5 H(+)(in) = a quinol + NAD(+) + 4 H(+)(out). NDH-1 shuttles electrons from NADH, via FMN and iron-sulfur (Fe-S) centers, to quinones in the respiratory chain. The immediate electron acceptor for the enzyme in this species is believed to be a menaquinone. Couples the redox reaction to proton translocation (for every two electrons transferred, four hydrogen ions are translocated across the cytoplasmic membrane), and thus conserves the redox energy in a proton gradient. The protein is NADH-quinone oxidoreductase subunit D of Bacillus thuringiensis subsp. konkukian (strain 97-27).